The following is a 152-amino-acid chain: Transcriptional regulator MraZ (152 aa).

2 consecutive SpoVT-AbrB domains span residues 5–52 and 81–124; these read ATLV…PLPE and ASEC…DETT.

Belongs to the MraZ family. In terms of assembly, forms oligomers.

The protein localises to the cytoplasm. The protein resides in the nucleoid. Negatively regulates its own expression and that of the subsequent genes in the proximal part of the division and cell wall (dcw) gene cluster. Acts by binding directly to DNA. May also regulate the expression of genes outside the dcw cluster. The sequence is that of Transcriptional regulator MraZ from Salmonella paratyphi A (strain ATCC 9150 / SARB42).